Reading from the N-terminus, the 1338-residue chain is MWQFIRSRILTVIIFIGAAHGLLVVGPKFIRANQEYTLVISNFNSQLSKVDLLLKLEGETDNGLSVLNVTKMVDVRRNMNRMINFNMPEDLTAGNYKITIDGQRGFSFHKEAELVYLSKSISGLIQVDKPVFKPGDTVNFRVIVLDTELKPPARVKSVYVTIRDPQRNVIRKWSTAKLYAGVFESDLQIAPTPMLGVWNISVEVEGEELVSKTFEVKEYVLSTFDVQVMPSVIPLEEHQAVNLTIEANYHFGKPVQGVAKVELYLDDDKLKLKKELTVYGKGQVELRFDNFAMDADQQDVPVKVSFVEQYTNRTVVKQSQITVYRYAYRVELIKESPQFRPGLPFKCALQFTHHDGTPAKGISGKVEVSDVRFETTTTSDNDGLIKLELQPSEGTEQLSIHFNAVDGFFFYEDVNKVETVTDAYIKLELKSPIKRNKLMRFMVTCTERMTFFVYYVMSKGNIIDAGFMRPNKQPKYLLQLNATEKMIPRAKILIATVAGRTVVYDFADLDFQELRNNFDLSIDEQEIKPGRQIELSMSGRPGAYVGLAAYDKALLLFNKNHDLFWEDIGQVFDGFHAINENEFDIFHSLGLFARTLDDILFDSANEKTGRNALQSGKPIGKLVSYRTNFQESWLWKNVSIGRSGSRKLIEVVPDTTTSWYLTGFSIDPVYGLGIIKKPIQFTTVQPFYIVENLPYSIKRGEAVVLQFTLFNNLGAEYIADVTLYNVANQTEFVGRPNTDLSYTKSVSVPPKVGVPISFLIKARKLGEMAVRVKASIMLGHETDALEKVIRVMPESLVQPRMDTRFFCFDDHKNQTFPINLDINKKADSGSTKIEFRLNPNLLTTVIKNLDHLLGVPTGCGEQNMVKFVPNILVLDYLHAIGSKEQHLIDKATNLLRQGYQNQMRYRQTDGSFGLWETTNGSVFLTAFVGTSMQTAVKYISDIDAAMVEKALDWLASKQHFSGRFDKAGAEYHKEMQGGLRNGVALTSYVLMALLENDIAKAKHAEVIQKGMTYLSNQFGSINNAYDLSIATYAMMLNGHTMKEEALNKLIDMSFIDADKNERFWNTTNPIETTAYALLSFVMAEKYTDGIPVMNWLVNQRYVTGSFPSTQDTFVGLKALTKMAEKISPSRNDYTVQLKYKKSAKYFKINSEQIDVENFVDIPEDTKKLEINVGGIGFGLLEVVYQFNLNLVNFENRFQLDLEKQNTGSDYELRLKVCASYIPQLTDRRSNMALIEVTLPSGYVVDRNPISEQTKVNPIQKTEIRYGGTSVVLYYDNMGSERNCFTLTAYRRFKVALKRPAYVVVYDYYNTNLNAIKVYEVDKQNLCEICDEEDCPAEC.

The N-terminal stretch at 1 to 21 (MWQFIRSRILTVIIFIGAAHG) is a signal peptide. Residues asparagine 68, asparagine 199, asparagine 242, asparagine 312, and asparagine 481 are each glycosylated (N-linked (GlcNAc...) asparagine). The may contain the cleavage site stretch occupies residues 580-609 (ENEFDIFHSLGLFARTLDDILFDSANEKTG). N-linked (GlcNAc...) asparagine glycosylation is found at asparagine 637, asparagine 728, and asparagine 813. The segment at residues 859–862 (CGEQ) is a cross-link (isoglutamyl cysteine thioester (Cys-Gln)). Residues asparagine 919 and asparagine 1065 are each glycosylated (N-linked (GlcNAc...) asparagine). Intrachain disulfides connect cysteine 1217-cysteine 1283, cysteine 1326-cysteine 1338, and cysteine 1329-cysteine 1334.

Heterodimer of a TEP1-N chain and an TEP1-C chain non-covalently linked. Forms a complex composed of TEP1-N and TEP1-C heterodimer, LRIM1 and APL1C; the interaction stabilizes TEP1-N and TEP1-C heterodimer, prevents its binding to tissues while circulating in the hemolymph and protects the thioester bond from hydrolysis. Mature TEP1 and to a lesser extent full-length TEP1 interact with SPCLIP1; the interaction is induced by microbial infection. Post-translationally, in the hemolymph, the full-length protein is cleaved by an unknow protease into a 75kDa N-terminal (TEP1-N) chain and an 80kDa C-terminal (TEP1-C) chain which remain non-covalently linked. The TEP1-C chain contains the thioester bond which covalently binds to the pathogen surface. Cleavage is induced by bacterial infection or aseptic wound injury. During embryonic and pupal development, the cleaved form is the predominant form. N-glycosylated.

It is found in the secreted. Functionally, plays an essential role in the innate immune response against bacteria, fungi and protozoa infection. After proteolytic cleavage, the protein C-terminus binds covalently through a thioester bond to the pathogen surface resulting in pathogen clearance either by melanization or lysis. Initiate the recruitment and activation of a cascade of proteases, mostly of CLIP-domain serine proteases, which leads to the proteolytic cleavage of the prophenoloxidase (PPO) into active phenoloxidase (PO), the rate-limiting enzyme in melanin biosynthesis. In response to parasite P.berghei-mediated infection, binds to and mediates killing of ookinetes, as they egress from midgut epithelial cells into the basal labyrinth, by both lysis and melanization. During bacterial infection, binds to both Gram-positive and Gram-negative bacteria but only promotes phagocytosis of Gram-negative bacteria. Promotes the accumulation of SPCLIP1 onto the surface of P.berghei ookinetes and bacterium E.coli which leads to the melanization of the pathogen. Recruits CLIPA2 to bacteria surface. In response to bacterial infection, required for periostial hemocyte aggregation, but not for the aggregation of sessile hemocytes in non-periostial regions. During the late stage of fungus B.bassiana-mediated infection, required for the initiation of hyphae melanization by binding to the surface of hyphae and recruiting prophenoloxidase PPO to them. Plays a role in male fertility by binding to defective sperm cells and promoting their removal during spermatogenesis. Its function is as follows. Binds to and mediates killing of parasite P.bergei ookinetes by lysis and melanization. Binds covalently through a thioester bond to the pathogen surface resulting in pathogen clearance. The polypeptide is Thioester-containing protein 1 allele R1 (Anopheles gambiae (African malaria mosquito)).